The sequence spans 148 residues: Deoxyuridine 5'-triphosphate nucleotidohydrolase (148 aa).

Residues arginine 67–glycine 69, asparagine 80, leucine 84–aspartate 86, and methionine 94 each bind substrate.

It belongs to the dUTPase family. Mg(2+) is required as a cofactor.

The catalysed reaction is dUTP + H2O = dUMP + diphosphate + H(+). Its pathway is pyrimidine metabolism; dUMP biosynthesis; dUMP from dCTP (dUTP route): step 2/2. Its function is as follows. This enzyme is involved in nucleotide metabolism: it produces dUMP, the immediate precursor of thymidine nucleotides and it decreases the intracellular concentration of dUTP so that uracil cannot be incorporated into DNA. This is Deoxyuridine 5'-triphosphate nucleotidohydrolase from Burkholderia mallei (strain NCTC 10247).